Here is a 498-residue protein sequence, read N- to C-terminus: MASQGTKRSYEQMETDGERQNATEIRASVGKMIDGIGRFYIQMCTELKLSDYEGRLIQNSLTIERMVLSAFDERRNRYLEEHPSAGKDPKKTGGPIYKRVDGKWMRELVLYDKEEIRRIWRQANNGDDATAGLTHMMIWHSNLNDTTYQRTRALVRTGMDPRMCSLMQGSTLPRRSGAAGAAVKGVGTMVMELIRMIKRGINDRNFWRGENGRKTRSAYERMCNILKGKFQTAAQRAMMDQVRESRNPGNAEIEDLIFSARSALILRGSVAHKSCLPACVYGPAVASGYNFEKEGYSLVGIDPFKLLQNSQVYSLIRPNENPAHKSQLVWMACHSAAFEDLRLLSFIRGTKVSPRGKLSTRGVQIASNENMDTMESSTLELRSRYWAIRTRSGGNTNQQRASAGQISVQPAFSVQRNLPFDKSTIMAAFTGNTEGRTSDMRAEIIRMMEGAKPEEVSFRGRGVFELSDEKATNPVVPSFDMSNEGSYFFGDNAEEYDN.

Positions 1–18 match the Unconventional nuclear localization signal motif; sequence MASQGTKRSYEQMETDGE. The tract at residues 1–21 is disordered; that stretch reads MASQGTKRSYEQMETDGERQN. A compositionally biased stretch (basic and acidic residues) spans 8 to 21; that stretch reads RSYEQMETDGERQN. The short motif at 198–216 is the Bipartite nuclear localization signal element; sequence KRGINDRNFWRGENGRKTR.

The protein belongs to the influenza viruses nucleoprotein family. Homomultimerizes to form the nucleocapsid. May bind host exportin-1/XPO1. Binds to viral genomic RNA. Protein-RNA contacts are mediated by a combination of electrostatic interactions between positively charged residues and the phosphate backbone and planar interactions between aromatic side chains and bases. In terms of processing, late in virus-infected cells, may be cleaved from a 56-kDa protein to a 53-kDa protein by a cellular caspase. This cleavage might be a marker for the onset of apoptosis in infected cells or have a specific function in virus host interaction.

The protein resides in the virion. It is found in the host nucleus. Functionally, encapsidates the negative strand viral RNA, protecting it from nucleases. The encapsidated genomic RNA is termed the ribonucleoprotein (RNP) and serves as template for transcription and replication. The RNP needs to be localized in the host nucleus to start an infectious cycle, but is too large to diffuse through the nuclear pore complex. NP comprises at least 2 nuclear localization signals that are responsible for the active RNP import into the nucleus through cellular importin alpha/beta pathway. Later in the infection, nclear export of RNPs are mediated through viral proteins NEP interacting with M1 which binds nucleoproteins. It is possible that nucleoprotein binds directly host exportin-1/XPO1 and plays an active role in RNPs nuclear export. M1 interaction with RNP seems to hide nucleoprotein's nuclear localization signals. Soon after a virion infects a new cell, M1 dissociates from the RNP under acidification of the virion driven by M2 protein. Dissociation of M1 from RNP unmasks nucleoprotein's nuclear localization signals, targeting the RNP to the nucleus. This is Nucleoprotein from Influenza A virus (strain A/Beijing/39/1975 H3N2).